Consider the following 734-residue polypeptide: Ribosomal RNA large subunit methyltransferase K/L (734 aa).

The THUMP domain maps to His49–Leu167.

It belongs to the methyltransferase superfamily. RlmKL family.

Its subcellular location is the cytoplasm. The enzyme catalyses guanosine(2445) in 23S rRNA + S-adenosyl-L-methionine = N(2)-methylguanosine(2445) in 23S rRNA + S-adenosyl-L-homocysteine + H(+). The catalysed reaction is guanosine(2069) in 23S rRNA + S-adenosyl-L-methionine = N(2)-methylguanosine(2069) in 23S rRNA + S-adenosyl-L-homocysteine + H(+). In terms of biological role, specifically methylates the guanine in position 2445 (m2G2445) and the guanine in position 2069 (m7G2069) of 23S rRNA. This is Ribosomal RNA large subunit methyltransferase K/L from Acinetobacter baumannii (strain ACICU).